A 374-amino-acid polypeptide reads, in one-letter code: Amino acid binding protein (374 aa).

The signal sequence occupies residues 1–27; sequence MSKKLFRKGILALAVSSVMGLSTHALA.

Belongs to the leucine-binding protein family.

The protein localises to the periplasm. Functionally, binds primarily proteinogenic amino acids. The chain is Amino acid binding protein from Pseudomonas aeruginosa (strain ATCC 15692 / DSM 22644 / CIP 104116 / JCM 14847 / LMG 12228 / 1C / PRS 101 / PAO1).